We begin with the raw amino-acid sequence, 177 residues long: Probable chemoreceptor glutamine deamidase CheD (177 aa).

This sequence belongs to the CheD family.

The enzyme catalyses L-glutaminyl-[protein] + H2O = L-glutamyl-[protein] + NH4(+). Probably deamidates glutamine residues to glutamate on methyl-accepting chemotaxis receptors (MCPs), playing an important role in chemotaxis. The protein is Probable chemoreceptor glutamine deamidase CheD of Pseudomonas savastanoi pv. phaseolicola (strain 1448A / Race 6) (Pseudomonas syringae pv. phaseolicola (strain 1448A / Race 6)).